The sequence spans 531 residues: Fe-S cluster assembly factor HCF101, chloroplastic (531 aa).

Residues 1 to 62 constitute a chloroplast transit peptide; sequence MRNLRAAAPA…PRRVGRLRRR (62 aa). Residues 17–27 are compositionally biased toward pro residues; the sequence is APPLLLPPSTP. The disordered stretch occupies residues 17–37; that stretch reads APPLLLPPSTPTPRGAFSAKA. Residues 28–37 are compositionally biased toward low complexity; sequence TPRGAFSAKA. 181-188 is an ATP binding site; the sequence is CKGGVGKS.

The protein belongs to the Mrp/NBP35 ATP-binding proteins family. [4Fe-4S] cluster serves as cofactor.

It localises to the plastid. It is found in the chloroplast stroma. In terms of biological role, required for photosystem I (PSI) biosynthesis and assembly. May serve as a chloroplast scaffold protein that specifically assembles iron-sulfur (4Fe-4S) clusters and transfers them to the chloroplast PSI and ferredoxin-thioredoxin (FTR) complexes. Probably not required for assembly or stability of plastidic 2Fe-2S clusters. This Oryza sativa subsp. japonica (Rice) protein is Fe-S cluster assembly factor HCF101, chloroplastic (HCF101).